The sequence spans 506 residues: Chromosomal replication initiator protein DnaA (506 aa).

The tract at residues 1-87 (MSVELWQQCV…IGSRRSSAPR (87 aa)) is domain I, interacts with DnaA modulators. The domain II stretch occupies residues 87–169 (RAAPNAPVSA…QVEGALKHTS (83 aa)). The interval 135–154 (DSFDAMAEPAAAPPSGGGRA) is disordered. A compositionally biased stretch (low complexity) spans 139-148 (AMAEPAAAPP). The interval 170–386 (YLNRTFTFDT…GALKRVIAHS (217 aa)) is domain III, AAA+ region. The ATP site is built by Gly214, Gly216, Lys217, and Thr218. Residues 387 to 506 (HFMGRDITIE…YKNLLRTLTT (120 aa)) form a domain IV, binds dsDNA region.

Belongs to the DnaA family. Oligomerizes as a right-handed, spiral filament on DNA at oriC.

It localises to the cytoplasm. Its function is as follows. Plays an essential role in the initiation and regulation of chromosomal replication. ATP-DnaA binds to the origin of replication (oriC) to initiate formation of the DNA replication initiation complex once per cell cycle. Binds the DnaA box (a 9 base pair repeat at the origin) and separates the double-stranded (ds)DNA. Forms a right-handed helical filament on oriC DNA; dsDNA binds to the exterior of the filament while single-stranded (ss)DNA is stabiized in the filament's interior. The ATP-DnaA-oriC complex binds and stabilizes one strand of the AT-rich DNA unwinding element (DUE), permitting loading of DNA polymerase. After initiation quickly degrades to an ADP-DnaA complex that is not apt for DNA replication. Binds acidic phospholipids. Non-cooperatively binds DnaA boxes in the minimal plasmid RK2 replication origin (oriV). In vitro in the presence of plasmid RK2-derived TrfA and E.coli protein HU, forms an open complex at oriV. This complex was not however competent for formation of a pre-priming complex with E.coli DnaB and DnaC. Broad host range plasmid RK2 requires not only DnaA for replication but also TrfA and host factors. This Pseudomonas putida (strain ATCC 47054 / DSM 6125 / CFBP 8728 / NCIMB 11950 / KT2440) protein is Chromosomal replication initiator protein DnaA.